Consider the following 215-residue polypeptide: Deoxyadenosine kinase (215 aa).

9-17 contributes to the ATP binding site; that stretch reads GPIGAGKSS. Residues E33, Y45, and N56 each contribute to the substrate site. Catalysis depends on D79, which acts as the Proton acceptor. Substrate is bound by residues R80, D85, and E150.

The protein belongs to the DCK/DGK family. As to quaternary structure, heterodimer of a deoxyadenosine (DAK) and a deoxyguanosine kinase (DGK).

The catalysed reaction is 2'-deoxyadenosine + ATP = dAMP + ADP + H(+). Its function is as follows. DGK/DAK plays an essential role in generating the deoxyribonucleotide precursors, dGTP and dATP, for DNA metabolism. The polypeptide is Deoxyadenosine kinase (Lactobacillus acidophilus (strain ATCC 700396 / NCK56 / N2 / NCFM)).